The primary structure comprises 452 residues: MLTLQEVVETIKMVQEENLDIRTITMGISLRDCADPNPRAARQKIYDKITRLAGNLVKTGEEIEREYGLPIVNKRISVTPIAIVAESCNTGNFADFARTLDEAAAAVGVNFIGGFSALVHKGFTAADHRLIDSIPEALATTERVCSSVNVATTKAGINMDAVYRMGHIIKKTAELTADRDSIGCAKLVVFANVPEDNPFMAGAFHGVGEPECVINVGVSGPGVVKNAVRTAKGADFGVLAETVKKTAFKITRMGELVGRTAARKLGVPFGIVDISLAPTPAVGDSVAEILECMGLERCGTHGTTAALALLNDAVKKGGAMASSYVGGLSGAFIPVSEDAGMIRAAEAGSLTLDKLEALTCVCSVGLDMIAVPGDTPPETIAAIIADEAAIGIINKKTTAVRLIPAAGKKAGDYVEFGGLLGRAPVMPVKPFSAGEFVRRGGRIPAPINSLTN.

This sequence belongs to the UPF0210 family. Homodimer.

The chain is UPF0210 protein PTH_0987 from Pelotomaculum thermopropionicum (strain DSM 13744 / JCM 10971 / SI).